The sequence spans 267 residues: MSDHPTAYLVLASQRSGSTLLVESLRATGVAGEPQEFFQYLPNTSMSPQPREWFADVEDQSILRLLDPLIEGKPDLAPATIWRDYIQTVGRTPNGVWGGKLMWNQTPLLVQRAKDLPDRSGSGLLSAIRDVVGSDPVLIHIHRPDVVSQAVSFWRAVQTRVWRGRPDPVRDARAEYHAGAIAHVITMLRAQEEGWRAWFTEENVEPIDVDYPYLWRNLTEVVGTVLEALGQDPRLAPKPVLERQADQRSDEWVERYRRDAQRDGLPL.

Alpha,alpha-trehalose-binding positions include Gln14, 33 to 39, Pro48, and Trp53; that span reads EPQEFFQ. The active-site Proton acceptor is Glu36.

It belongs to the Stf0 sulfotransferase family. In terms of assembly, homodimer.

It catalyses the reaction alpha,alpha-trehalose + 3'-phosphoadenylyl sulfate = 2-O-sulfo-alpha,alpha-trehalose + adenosine 3',5'-bisphosphate + H(+). It functions in the pathway glycolipid metabolism. Functionally, catalyzes the sulfuryl group transfer from 3'-phosphoadenosine-5'-phosphosulfate (PAPS) to trehalose, leading to trehalose-2-sulfate (T2S). The sulfation of trehalose is the first step in the biosynthesis of sulfolipid-1 (SL-1), a major cell wall glycolipid in pathogenic mycobacteria. Cannot use free glucose and unnatural stereoisomers of trehalose (alpha,beta (neo-trehalose) and beta,beta (iso-trehalose)) as substrates. The sequence is that of Trehalose 2-sulfotransferase from Mycolicibacterium smegmatis (strain ATCC 700084 / mc(2)155) (Mycobacterium smegmatis).